Consider the following 624-residue polypeptide: Alpha-galactosidase 3 (624 aa).

The first 22 residues, 1 to 22 (MSPSAAVLIPLAAAVLLRPVVG), serve as a signal peptide directing secretion. Residues Asn37, Asn56, Asn197, Asn259, and Asn293 are each glycosylated (N-linked (GlcNAc...) asparagine). Asp347 (nucleophile) is an active-site residue. Asn393 carries N-linked (GlcNAc...) asparagine glycosylation. Asp412 (proton donor) is an active-site residue. Asn469 is a glycosylation site (N-linked (GlcNAc...) asparagine).

The protein belongs to the glycosyl hydrolase 27 family.

It localises to the secreted. It catalyses the reaction Hydrolysis of terminal, non-reducing alpha-D-galactose residues in alpha-D-galactosides, including galactose oligosaccharides, galactomannans and galactolipids.. Its function is as follows. Alpha-galactosidase involved in the degradation of simple oligosaccharides like melibiose, raffinose and stachyose, and of polymeric galacto(gluco)mannans. This Hypocrea jecorina (Trichoderma reesei) protein is Alpha-galactosidase 3 (agl3).